A 347-amino-acid polypeptide reads, in one-letter code: S-adenosylmethionine:tRNA ribosyltransferase-isomerase (347 aa).

This sequence belongs to the QueA family. In terms of assembly, monomer.

The protein localises to the cytoplasm. The catalysed reaction is 7-aminomethyl-7-carbaguanosine(34) in tRNA + S-adenosyl-L-methionine = epoxyqueuosine(34) in tRNA + adenine + L-methionine + 2 H(+). The protein operates within tRNA modification; tRNA-queuosine biosynthesis. In terms of biological role, transfers and isomerizes the ribose moiety from AdoMet to the 7-aminomethyl group of 7-deazaguanine (preQ1-tRNA) to give epoxyqueuosine (oQ-tRNA). The polypeptide is S-adenosylmethionine:tRNA ribosyltransferase-isomerase (Xylella fastidiosa (strain 9a5c)).